The following is a 274-amino-acid chain: Ommochrome-binding protein (274 aa).

The signal sequence occupies residues 1 to 18; sequence MKLLILTICALHVNQMMA. The N-linked (GlcNAc...) asparagine glycan is linked to Asn-183.

In terms of assembly, monomer. Present in larval hemolymph and synthesized by the fat body.

Its function is as follows. Binds to an ommochrome, ommatin D which is a yellow chromophore. May be involved in guiding the chromophore through the hemolymph from the epidermis to the gut. The protein is Ommochrome-binding protein of Manduca sexta (Tobacco hawkmoth).